A 434-amino-acid chain; its full sequence is uncharacterized protein (434 aa).

Transmembrane regions (helical) follow at residues 50-70, 72-92, 95-115, 135-155, 158-178, 179-199, 229-249, 288-308, 319-339, 376-396, and 412-432; these read GSIA…SFTL, TGLL…VLAI, LMAF…LLPV, SPVV…QFGW, SLIA…YFPH, LNPE…IAIT, LPYI…KIFA, GFVP…VAGF, PNPM…VLLL, IFAA…AIYF, and VVAV…GLFV.

It localises to the cell membrane. This is an uncharacterized protein from Escherichia coli (strain K12).